A 601-amino-acid chain; its full sequence is Potassium channel KAT2 (601 aa).

Residues 1–42 (METISNIFHNDPLPPLGARANQSIKLRKFIISPYDSRYRTWE) lie on the Cytoplasmic side of the membrane. Residues 43 to 63 (TFLLVLVVYSAWICPFELAYL) traverse the membrane as a helical segment. The Extracellular segment spans residues 64 to 71 (RNLSWKVS). The helical transmembrane segment at 72-92 (LVDNIIDSFFAIDIILTFFLA) threads the bilayer. Residues 93 to 112 (YLDQKSYLLVDDPKRIVARY) lie on the Cytoplasmic side of the membrane. Residues 113–133 (FSSWFLFDVCSTIPYQLLGQI) form a helical membrane-spanning segment. The Extracellular portion of the chain corresponds to 134–144 (FKKHENGLAYR). A helical; Voltage-sensor transmembrane segment spans residues 145–165 (LLSMLRLWRLRRLSELFARLE). Topologically, residues 166–179 (KDIRLNYYWIRCTK) are cytoplasmic. The chain crosses the membrane as a helical span at residues 180-200 (LISVTLFAVHCSGCFNYLIAD). Residues 201–227 (RYPNPARTWIGAAIPNYRSQNLWVRYV) lie on the Extracellular side of the membrane. An intramembrane region (pore-forming) is located at residues 228–247 (TAIYWSITTLTTTGYGDLHA). Residues 248–251 (ENQR) lie on the Extracellular side of the membrane. Residues 252–272 (EMLFSICYMLFNLGLTAYLIG) traverse the membrane as a helical segment. Topologically, residues 273–601 (NMTNLVVQGS…DGDHLFFMEI (329 aa)) are cytoplasmic. 356-475 (LFHGVSFTCM…RVILNNLSQK (120 aa)) serves as a coordination point for a nucleoside 3',5'-cyclic phosphate. Residues 530 to 601 (RVTIHMYSQR…DGDHLFFMEI (72 aa)) form the KHA domain.

This sequence belongs to the potassium channel family. Plant (TC 1.A.1.4) subfamily.

It is found in the membrane. Its function is as follows. Probable inward-rectifying potassium channel. Assuming opened or closed conformations in response to the voltage difference across the membrane, the channel is activated by hyperpolarization. The sequence is that of Potassium channel KAT2 from Oryza sativa subsp. japonica (Rice).